The primary structure comprises 584 residues: Tricyclene synthase 1e20, chloroplastic (584 aa).

A chloroplast-targeting transit peptide spans 1 to 45 (MIYIWICFYLQTTLLPCSLSTRTKFAICHNTSKLHRAAYKTSRWN). 3 N-linked (GlcNAc...) asparagine glycosylation sites follow: Asn-30, Asn-209, and Asn-322. Residues Asp-341 and Asp-345 each coordinate Mg(2+). The DDXXD motif signature appears at 341–345 (DDIFD). Residues Asn-387 and Asn-468 are each glycosylated (N-linked (GlcNAc...) asparagine). Mg(2+) is bound by residues Asn-485, Ser-489, and Glu-493. A glycan (N-linked (GlcNAc...) asparagine) is linked at Asn-512.

It belongs to the terpene synthase family. Tpsg subfamily. Requires Mg(2+) as cofactor. Mn(2+) serves as cofactor. As to expression, accumulates at low levels in flowers; mostly expressed in both upper and lower petal lobes, and, to a lower extent, in tube and stamens.

It localises to the plastid. Its subcellular location is the chloroplast stroma. It carries out the reaction (2E)-geranyl diphosphate = tricyclene + diphosphate. It catalyses the reaction (2E)-geranyl diphosphate = beta-myrcene + diphosphate. It functions in the pathway secondary metabolite biosynthesis; terpenoid biosynthesis. In terms of biological role, may contribute to floral scent emission. In Antirrhinum majus (Garden snapdragon), this protein is Tricyclene synthase 1e20, chloroplastic (1e20).